The chain runs to 100 residues: NAD(P)H-quinone oxidoreductase subunit 4L, chloroplastic (100 aa).

3 helical membrane passes run 1–21, 30–50, and 60–80; these read MLEN…YGLT, LMCL…FSSF, and VFAI…LAII.

Belongs to the complex I subunit 4L family. As to quaternary structure, NDH is composed of at least 16 different subunits, 5 of which are encoded in the nucleus.

The protein resides in the plastid. It is found in the chloroplast thylakoid membrane. The enzyme catalyses a plastoquinone + NADH + (n+1) H(+)(in) = a plastoquinol + NAD(+) + n H(+)(out). It catalyses the reaction a plastoquinone + NADPH + (n+1) H(+)(in) = a plastoquinol + NADP(+) + n H(+)(out). Its function is as follows. NDH shuttles electrons from NAD(P)H:plastoquinone, via FMN and iron-sulfur (Fe-S) centers, to quinones in the photosynthetic chain and possibly in a chloroplast respiratory chain. The immediate electron acceptor for the enzyme in this species is believed to be plastoquinone. Couples the redox reaction to proton translocation, and thus conserves the redox energy in a proton gradient. This chain is NAD(P)H-quinone oxidoreductase subunit 4L, chloroplastic, found in Staurastrum punctulatum (Green alga).